The following is a 327-amino-acid chain: Chlorophenol reductase (327 aa).

The N-terminal stretch at 1–24 is a signal peptide; sequence MKKTLGIILSISLAFSVLALPIFA. One can recognise a LysM domain in the interval 65-110; it reads TYYTVVSGDFFWQIAAKHGLTIDALAKLNPQIKNVNLIFPGQKILV.

Cob(I)alamin serves as cofactor.

The protein localises to the secreted. The protein resides in the cell wall. Its subcellular location is the cell membrane. Its activity is regulated as follows. Inhibited by sulfide and to a lesser extent by nitrite. Reductive dechlorination of ortho-chlorophenols. Dechlorinates in the ortho position with respect to the hydroxyl group. This is Chlorophenol reductase from Desulfitobacterium hafniense (Desulfitobacterium frappieri).